We begin with the raw amino-acid sequence, 2098 residues long: 1-phosphatidylinositol 3-phosphate 5-kinase (2098 aa).

Positions 1–45 (MATDDKTSPTLDSANDLPRSPTSPSHLTHFKPLTPDQDEPPFKSA) are disordered. Position 2 is an N-acetylalanine (Ala2). Phosphoserine; by autocatalysis occurs at positions 23 and 48. The interval 57–123 (KERAEGGQGE…EPTFGGHDPR (67 aa)) is disordered. Over residues 66–88 (EQQPLSGSWTSPQLPSRTQSVRS) the composition is skewed to polar residues. At Ser88 the chain carries Phosphoserine. The segment at 158–218 (DSQCKECYDC…ACTYCRKIAL (61 aa)) adopts an FYVE-type zinc-finger fold. Residues Cys164, Cys167, Cys180, Cys183, Cys188, Cys191, Cys210, and Cys213 each coordinate Zn(2+). Positions 292–329 (VQEDAGKSPARNRSASITNLSLDRSGSPMVPSYETSVS) are disordered. Residues Ser299, Ser307, and Ser312 each carry the phosphoserine modification. Polar residues predominate over residues 302–315 (RNRSASITNLSLDR). Ser318 carries the post-translational modification Phosphoserine; by PKB/AKT1 or PKB/AKT2. Residue Ser329 is modified to Phosphoserine. A DEP domain is found at 365–440 (HSSGMEFQDH…DEYALYRPLQ (76 aa)). The span at 442–459 (TEFSETPSPDSDSVNSVE) shows a compositional bias: polar residues. Residues 442 to 469 (TEFSETPSPDSDSVNSVEGHSEPSWFKD) are disordered. Basic and acidic residues predominate over residues 460 to 469 (GHSEPSWFKD). At Ser475 the chain carries Phosphoserine. A disordered region spans residues 484-505 (GDDNLANSASPSKRTSVSSFQS). Over residues 488–505 (LANSASPSKRTSVSSFQS) the composition is skewed to polar residues. The chaperonin-like domain stretch occupies residues 616-868 (MMALLQQLLH…MICVAYHSQL (253 aa)). Disordered regions lie at residues 1161–1191 (RIQP…NEGD) and 1512–1616 (FQQE…STDS). Positions 1177–1186 (SSTSSGQSGS) are enriched in low complexity. Position 1522 is a phosphoserine; by autocatalysis (Ser1522). A phosphoserine mark is found at Ser1544 and Ser1549. The span at 1562–1578 (LTTLSSQSSTSSTHLQL) shows a compositional bias: low complexity. The residue at position 1669 (Ser1669) is a Phosphoserine; by autocatalysis. Positions 1692–1799 (QWNSAEEGLP…PQDEVDGGDT (108 aa)) are disordered. The segment covering 1704-1714 (STSDSRPKSSS) has biased composition (low complexity). The span at 1723-1735 (GGQTNRTTETEPQ) shows a compositional bias: polar residues. Ser1754 is modified (phosphoserine). The PIPK domain maps to 1758–2084 (SSQKRETLRG…RFCEAMDKYF (327 aa)). The interval 1842–2098 (EEDFIRSLSH…DHWTGLGLNC (257 aa)) is catalytic. Ser1969 and Ser2053 each carry phosphoserine; by autocatalysis.

In terms of assembly, component of the PI(3,5)P2 regulatory complex/PAS complex, at least composed of PIKFYVE, FIG4 and VAC14. VAC14 nucleates the assembly of the complex and serves as a scaffold by pentamerizing into a star-shaped structure, which can bind a single copy each of PIKFYVE and FIG4 and coordinates their activities. Interacts (via chaperonin-like domain) with RABEPK; the interaction recruits RABEPK to the endosomal membrane. Interacts with SPAG9. Interacts with EGFR. In terms of processing, autophosphorylates which inhibits its own phosphatidylinositol 3-phosphate 5-kinase activity, stimulates FIG4 lipid phosphatase activity and down-regulates lipid product formation. Dephosphorylated by FIG4 in the PI(3,5)P2 regulatory complex, at Ser-48, Ser-1669 and Ser-2053. Phosphorylated in response to insulin at Ser-318 in a protein kinase B (PKB)-dependent manner.

It localises to the endosome membrane. It is found in the early endosome membrane. Its subcellular location is the cytoplasmic vesicle. The protein localises to the phagosome membrane. The protein resides in the late endosome membrane. The enzyme catalyses a 1,2-diacyl-sn-glycero-3-phospho-(1D-myo-inositol-3-phosphate) + ATP = a 1,2-diacyl-sn-glycero-3-phospho-(1D-myo-inositol-3,5-bisphosphate) + ADP + H(+). It carries out the reaction a 1,2-diacyl-sn-glycero-3-phospho-(1D-myo-inositol) + ATP = a 1,2-diacyl-sn-glycero-3-phospho-(1D-myo-inositol-5-phosphate) + ADP + H(+). It catalyses the reaction L-seryl-[protein] + ATP = O-phospho-L-seryl-[protein] + ADP + H(+). Inhibited by apilimod and YM201636. In terms of biological role, dual specificity kinase implicated in myriad essential cellular processes such as maintenance of endomembrane homeostasis, and endocytic-vacuolar pathway, lysosomal trafficking, nuclear transport, stress- or hormone-induced signaling and cell cycle progression. The PI(3,5)P2 regulatory complex regulates both the synthesis and turnover of phosphatidylinositol 3,5-bisphosphate (PtdIns(3,5)P2). Sole enzyme to catalyze the phosphorylation of phosphatidylinositol 3-phosphate on the fifth hydroxyl of the myo-inositol ring, to form (PtdIns(3,5)P2). Also catalyzes the phosphorylation of phosphatidylinositol on the fifth hydroxyl of the myo-inositol ring, to form phosphatidylinositol 5-phosphate (PtdIns(5)P). Has serine-protein kinase activity and is able to autophosphorylate and transphosphorylate. Autophosphorylation inhibits its own phosphatidylinositol 3-phosphate 5-kinase activity, stimulates FIG4 lipid phosphatase activity and down-regulates lipid product formation. Involved in key endosome operations such as fission and fusion in the course of endosomal cargo transport. Required for the maturation of early into late endosomes, phagosomes and lysosomes. Regulates vacuole maturation and nutrient recovery following engulfment of macromolecules, initiates the redistribution of accumulated lysosomal contents back into the endosome network. Critical regulator of the morphology, degradative activity, and protein turnover of the endolysosomal system in macrophages and platelets. In neutrophils, critical to perform chemotaxis, generate ROS, and undertake phagosome fusion with lysosomes. Plays a key role in the processing and presentation of antigens by major histocompatibility complex class II (MHC class II) mediated by CTSS. Regulates melanosome biogenesis by controlling the delivery of proteins from the endosomal compartment to the melanosome. Essential for systemic glucose homeostasis, mediates insulin-induced signals for endosome/actin remodeling in the course of GLUT4 translocation/glucose uptake activation. Supports microtubule-based endosome-to-trans-Golgi network cargo transport, through association with SPAG9 and RABEPK. Mediates EGFR trafficking to the nucleus. Functionally, (Microbial infection) Required for cell entry of coronaviruses SARS-CoV and SARS-CoV-2, as well as human coronavirus EMC (HCoV-EMC) by endocytosis. The polypeptide is 1-phosphatidylinositol 3-phosphate 5-kinase (Homo sapiens (Human)).